Consider the following 285-residue polypeptide: uncharacterized protein (285 aa).

Helical transmembrane passes span 7–29 (FYRL…LTLQ), 49–71 (LVVW…STFF), 95–117 (IFLY…SNTL), 137–156 (FFSE…VLHA), 232–254 (KVVN…TVAL), and 259–281 (GGLS…IFVV).

The protein resides in the cell membrane. This is an uncharacterized protein from Aquifex aeolicus (strain VF5).